A 483-amino-acid chain; its full sequence is Glutamyl-tRNA(Gln) amidotransferase subunit A (483 aa).

Catalysis depends on charge relay system residues Lys76 and Ser151. The active-site Acyl-ester intermediate is Ser175.

Belongs to the amidase family. GatA subfamily. In terms of assembly, heterotrimer of A, B and C subunits.

The enzyme catalyses L-glutamyl-tRNA(Gln) + L-glutamine + ATP + H2O = L-glutaminyl-tRNA(Gln) + L-glutamate + ADP + phosphate + H(+). In terms of biological role, allows the formation of correctly charged Gln-tRNA(Gln) through the transamidation of misacylated Glu-tRNA(Gln) in organisms which lack glutaminyl-tRNA synthetase. The reaction takes place in the presence of glutamine and ATP through an activated gamma-phospho-Glu-tRNA(Gln). The chain is Glutamyl-tRNA(Gln) amidotransferase subunit A from Pseudomonas syringae pv. syringae (strain B728a).